The sequence spans 559 residues: Dihydroxy-acid dehydratase (559 aa).

Mg(2+) is bound at residue Asp78. [2Fe-2S] cluster is bound at residue Cys119. Mg(2+) contacts are provided by Asp120 and Lys121. Lys121 carries the post-translational modification N6-carboxylysine. Cys191 is a binding site for [2Fe-2S] cluster. Glu442 provides a ligand contact to Mg(2+). The active-site Proton acceptor is Ser468.

Belongs to the IlvD/Edd family. In terms of assembly, homodimer. [2Fe-2S] cluster serves as cofactor. Mg(2+) is required as a cofactor.

It carries out the reaction (2R)-2,3-dihydroxy-3-methylbutanoate = 3-methyl-2-oxobutanoate + H2O. It catalyses the reaction (2R,3R)-2,3-dihydroxy-3-methylpentanoate = (S)-3-methyl-2-oxopentanoate + H2O. The protein operates within amino-acid biosynthesis; L-isoleucine biosynthesis; L-isoleucine from 2-oxobutanoate: step 3/4. Its pathway is amino-acid biosynthesis; L-valine biosynthesis; L-valine from pyruvate: step 3/4. Functions in the biosynthesis of branched-chain amino acids. Catalyzes the dehydration of (2R,3R)-2,3-dihydroxy-3-methylpentanoate (2,3-dihydroxy-3-methylvalerate) into 2-oxo-3-methylpentanoate (2-oxo-3-methylvalerate) and of (2R)-2,3-dihydroxy-3-methylbutanoate (2,3-dihydroxyisovalerate) into 2-oxo-3-methylbutanoate (2-oxoisovalerate), the penultimate precursor to L-isoleucine and L-valine, respectively. The polypeptide is Dihydroxy-acid dehydratase (Agathobacter rectalis (strain ATCC 33656 / DSM 3377 / JCM 17463 / KCTC 5835 / VPI 0990) (Eubacterium rectale)).